The primary structure comprises 426 residues: tRNA(Met) cytidine acetate ligase (426 aa).

Residues 7–20 (VVEY…HLFH), glycine 101, asparagine 168, and arginine 193 contribute to the ATP site.

The protein belongs to the TmcAL family.

The protein localises to the cytoplasm. It catalyses the reaction cytidine(34) in elongator tRNA(Met) + acetate + ATP = N(4)-acetylcytidine(34) in elongator tRNA(Met) + AMP + diphosphate. Functionally, catalyzes the formation of N(4)-acetylcytidine (ac(4)C) at the wobble position of elongator tRNA(Met), using acetate and ATP as substrates. First activates an acetate ion to form acetyladenylate (Ac-AMP) and then transfers the acetyl group to tRNA to form ac(4)C34. This is tRNA(Met) cytidine acetate ligase from Kosmotoga olearia (strain ATCC BAA-1733 / DSM 21960 / TBF 19.5.1).